Reading from the N-terminus, the 384-residue chain is Polyketide synthase BAS (384 aa).

Catalysis depends on Cys-157, which acts as the Nucleophile and monoketide coumarate intermediate. At Cys-157 the chain carries S-(4-hydroxycinnamyl)cysteine.

Belongs to the thiolase-like superfamily. Chalcone/stilbene synthases family. Homodimer.

The catalysed reaction is 4-coumaroyl-CoA + malonyl-CoA + H2O + H(+) = 4-hydroxybenzalacetone + 2 CO2 + 2 CoA. It functions in the pathway secondary metabolite biosynthesis; flavonoid biosynthesis. Functionally, polyketide synthase producing 4-hydroxybenzalacetone. Can use p-coumaryl-CoA as substrate but does not accept hexanoyl-CoA, isobutyryl-CoA, isovaleryl-CoA, and acetyl-CoA as a substrates. Catalyzes the initial key reaction step in the biosynthesis of phenylbutanoids. In Rheum palmatum (Chinese rhubarb), this protein is Polyketide synthase BAS (BAS).